The following is a 269-amino-acid chain: Tryptophan synthase alpha chain (269 aa).

Active-site proton acceptor residues include glutamate 49 and aspartate 60.

It belongs to the TrpA family. In terms of assembly, tetramer of two alpha and two beta chains.

The catalysed reaction is (1S,2R)-1-C-(indol-3-yl)glycerol 3-phosphate + L-serine = D-glyceraldehyde 3-phosphate + L-tryptophan + H2O. The protein operates within amino-acid biosynthesis; L-tryptophan biosynthesis; L-tryptophan from chorismate: step 5/5. Its function is as follows. The alpha subunit is responsible for the aldol cleavage of indoleglycerol phosphate to indole and glyceraldehyde 3-phosphate. In Buchnera aphidicola subsp. Schlechtendalia chinensis, this protein is Tryptophan synthase alpha chain.